The sequence spans 308 residues: Protein UL135 (308 aa).

Residues 1–22 (MVWLWLGVGLLGGTGLASLVLA) form the signal peptide. The tract at residues 105-274 (KPEFPPARFE…TEPTTLPIVS (170 aa)) is disordered. Low complexity predominate over residues 126-145 (SIGRSPSHCSSSSSLSSSAS). Pro residues-rich tracts occupy residues 152-163 (QPPPSWKPPPPP) and 219-238 (PVTP…PRNP).

This sequence belongs to the HCMV UL135 family. As to quaternary structure, interacts with host components of the WAVE2 complex ABI1, NAP1 and WAVE2. Also interacts with host ABI2 and TLN1.

It is found in the host cell membrane. The protein resides in the host Golgi apparatus. In terms of biological role, remodels the host actin cytoskeleton in order to impair immune recognition of infected cells. Mechanistically, interacts with members of the host WAVE2 complex and redirects the complex to the plasma membrane. In turn, the efficiency of immune synapse formation is greatly reduced. This chain is Protein UL135 (UL135), found in Human cytomegalovirus (strain Merlin) (HHV-5).